The sequence spans 353 residues: MSASETPSASASRGLSYRDAGVDIEAGDALVDRIKPFAKRTLREGVLGGIGGFGALFEISKKYQEPVLVSGTDGVGTKLKLAFALNRHDTVGQDLVAMSVNDILVQGAEPLFFLDYFACGKLDVDTAATVIKGIAQGCELAGCALIGGETAEMPSMYPAGEYDLAGFAVGAVEKRKIIDGTTIACGDVVLGLASSGAHSNGYSLVRKIIEVSRPDLNADFHGQRLQDAIMAPTRIYVKPLLALIDKLPVKGMAHITGGGLVENVPRVLPEGVTAVLHQDAWTLPPLFQWLQKAGNVADDEMHRVFNCGIGMIVIVSAADAPAAIAHLKDAGETVYQIGEIRARQPGEAQTIVI.

Belongs to the AIR synthase family.

Its subcellular location is the cytoplasm. It carries out the reaction 2-formamido-N(1)-(5-O-phospho-beta-D-ribosyl)acetamidine + ATP = 5-amino-1-(5-phospho-beta-D-ribosyl)imidazole + ADP + phosphate + H(+). It participates in purine metabolism; IMP biosynthesis via de novo pathway; 5-amino-1-(5-phospho-D-ribosyl)imidazole from N(2)-formyl-N(1)-(5-phospho-D-ribosyl)glycinamide: step 2/2. This is Phosphoribosylformylglycinamidine cyclo-ligase from Ralstonia nicotianae (strain ATCC BAA-1114 / GMI1000) (Ralstonia solanacearum).